A 185-amino-acid polypeptide reads, in one-letter code: DNA-directed RNA polymerase 22 kDa subunit (185 aa).

Belongs to the poxviridae DNA-directed RNA polymerase 22 kDa subunit family. The DNA-dependent RNA polymerase used for intermediate and late genes expression consists of eight subunits Rpo30/OPG66, Rpo7/OPG90, Rpo22/OPG103, Rpo147/OPG105, Rpo18/OPG119, Rpo19/OPG131, Rpo132/OPG151 and Rpo35/OPG156. The same holoenzyme, with the addition of the transcription-specificity factor OPG109, is used for early gene expression.

Its subcellular location is the virion. The enzyme catalyses RNA(n) + a ribonucleoside 5'-triphosphate = RNA(n+1) + diphosphate. Functionally, part of the DNA-dependent RNA polymerase which catalyzes the transcription of viral DNA into RNA using the four ribonucleoside triphosphates as substrates. Responsible for the transcription of early, intermediate and late genes. DNA-dependent RNA polymerase associates with the early transcription factor (ETF), itself composed of OPG118 and OPG133, thereby allowing the early genes transcription. Late transcription, and probably also intermediate transcription, require newly synthesized RNA polymerase. The sequence is that of DNA-directed RNA polymerase 22 kDa subunit (OPG103) from Cynomys gunnisoni (Gunnison's prairie dog).